A 577-amino-acid chain; its full sequence is Probable L-gulonolactone oxidase 4 (577 aa).

A signal peptide spans 1–17 (MSFWLSLIFCFFTFASS). Residues 46–228 (SICKAAKVEY…SQVTFELQPM (183 aa)) enclose the FAD-binding PCMH-type domain.

The protein belongs to the oxygen-dependent FAD-linked oxidoreductase family. The cofactor is FAD.

The enzyme catalyses L-gulono-1,4-lactone + O2 = L-ascorbate + H2O2 + H(+). Its pathway is cofactor biosynthesis; L-ascorbate biosynthesis. In terms of biological role, may be involved in the biosynthesis of ascorbic acid. The chain is Probable L-gulonolactone oxidase 4 from Arabidopsis thaliana (Mouse-ear cress).